A 259-amino-acid chain; its full sequence is 14-3-3-like protein GF14 omega (259 aa).

Phosphoserine occurs at positions 67, 109, and 190. A Phosphothreonine modification is found at T211.

The protein belongs to the 14-3-3 family. As to quaternary structure, interacts with CINV1.

The protein localises to the nucleus. It is found in the cytoplasm. Functionally, is associated with a DNA binding complex that binds to the G box, a well-characterized cis-acting DNA regulatory element found in plant genes. The chain is 14-3-3-like protein GF14 omega (GRF2) from Arabidopsis thaliana (Mouse-ear cress).